The primary structure comprises 410 residues: Chlorobenzene dioxygenase, ferredoxin reductase component (410 aa).

4-35 (HVAIIGNGVAGFTTAQALRAEGFEGRISLIGN) serves as a coordination point for FAD. Residue 145-173 (RLVIAGGGLIGCEVATTARKLGLAVTILE) participates in NAD(+) binding.

This sequence belongs to the bacterial ring-hydroxylating dioxygenase ferredoxin reductase family. As to quaternary structure, this dioxygenase system consists of four proteins: the two subunits of the oxygenase component (TecA1 and TecA2), a ferredoxin (TecA3) and a ferredoxin reductase (TecA4). Requires FAD as cofactor.

It catalyses the reaction 2 reduced [2Fe-2S]-[ferredoxin] + NAD(+) + H(+) = 2 oxidized [2Fe-2S]-[ferredoxin] + NADH. Its pathway is aromatic compound metabolism. Part of the chlorobenzene dioxygenase system that catalyzes the dihydroxylation of a range of aromatic compounds, including chlorinated benzenes and toluenes, and dinuclear aromatics such as biphenyl and dibenzo-p-dioxin. This chain is Chlorobenzene dioxygenase, ferredoxin reductase component, found in Cupriavidus sp. (strain PS12).